Reading from the N-terminus, the 280-residue chain is Probable endonuclease 4 (280 aa).

Zn(2+) contacts are provided by histidine 69, histidine 109, glutamate 145, aspartate 179, histidine 182, histidine 216, aspartate 229, histidine 231, and glutamate 261.

Belongs to the AP endonuclease 2 family. The cofactor is Zn(2+).

It catalyses the reaction Endonucleolytic cleavage to 5'-phosphooligonucleotide end-products.. Endonuclease IV plays a role in DNA repair. It cleaves phosphodiester bonds at apurinic or apyrimidinic (AP) sites, generating a 3'-hydroxyl group and a 5'-terminal sugar phosphate. The chain is Probable endonuclease 4 from Erwinia tasmaniensis (strain DSM 17950 / CFBP 7177 / CIP 109463 / NCPPB 4357 / Et1/99).